The primary structure comprises 286 residues: Release factor glutamine methyltransferase (286 aa).

Asp148 and Asn194 together coordinate S-adenosyl-L-methionine. Position 194–197 (194–197 (NPPY)) interacts with substrate.

It belongs to the protein N5-glutamine methyltransferase family. PrmC subfamily.

The enzyme catalyses L-glutaminyl-[peptide chain release factor] + S-adenosyl-L-methionine = N(5)-methyl-L-glutaminyl-[peptide chain release factor] + S-adenosyl-L-homocysteine + H(+). In terms of biological role, methylates the class 1 translation termination release factors RF1/PrfA and RF2/PrfB on the glutamine residue of the universally conserved GGQ motif. This chain is Release factor glutamine methyltransferase, found in Leptospira interrogans serogroup Icterohaemorrhagiae serovar Lai (strain 56601).